The sequence spans 914 residues: WAG22 antigen (914 aa).

One can recognise a PE domain in the interval 1-93 (MSFVIAVPET…GGAYAAAEAA (93 aa)). Disordered stretches follow at residues 412 to 431 (GGSG…AGGA) and 895 to 914 (AGAG…HGLT). Residues 895–904 (AGAGGAGGLV) are compositionally biased toward gly residues.

The protein belongs to the mycobacterial PE family. PGRS subfamily.

The protein is WAG22 antigen (wag22) of Mycobacterium bovis (strain ATCC BAA-935 / AF2122/97).